Reading from the N-terminus, the 165-residue chain is Protein SprT (165 aa).

Positions leucine 22 to valine 163 constitute a SprT-like domain. A Zn(2+)-binding site is contributed by histidine 78. Glutamate 79 is a catalytic residue. Histidine 82 lines the Zn(2+) pocket.

It belongs to the SprT family. Zn(2+) serves as cofactor.

The protein resides in the cytoplasm. The polypeptide is Protein SprT (Salmonella agona (strain SL483)).